The sequence spans 111 residues: Prostate and testis expressed protein 2 (111 aa).

An N-terminal signal peptide occupies residues 1 to 18; that stretch reads MFVLVMICLFCQYWGVLN. The region spanning 27-108 is the UPAR/Ly6 domain; sequence LLCYKCKKYH…CKHSNYCNLP (82 aa). 4 disulfide bridges follow: Cys-29-Cys-55, Cys-32-Cys-40, Cys-47-Cys-78, and Cys-82-Cys-99.

This sequence belongs to the PATE family. In terms of tissue distribution, expressed in prostate, testis, brain and lung.

The protein localises to the secreted. The protein is Prostate and testis expressed protein 2 (Pate2) of Mus musculus (Mouse).